We begin with the raw amino-acid sequence, 250 residues long: NAD-dependent protein deacylase (250 aa).

In terms of domain architecture, Deacetylase sirtuin-type spans 1–250 (MIVEVARVLA…VVHEVRRLLQ (250 aa)). Position 20–39 (20–39 (GAGISAESGVPTFRGKDGLW)) interacts with NAD(+). Positions 64 and 67 each coordinate substrate. Residue 98–101 (QNVD) participates in NAD(+) binding. His116 acts as the Proton acceptor in catalysis. Residues Cys124, Cys127, Cys150, and Cys153 each coordinate Zn(2+). Residues 190–192 (GTS), 216–218 (NVE), and Ala234 each bind NAD(+).

This sequence belongs to the sirtuin family. Class III subfamily. Zn(2+) serves as cofactor.

It is found in the cytoplasm. It catalyses the reaction N(6)-acetyl-L-lysyl-[protein] + NAD(+) + H2O = 2''-O-acetyl-ADP-D-ribose + nicotinamide + L-lysyl-[protein]. The enzyme catalyses N(6)-succinyl-L-lysyl-[protein] + NAD(+) + H2O = 2''-O-succinyl-ADP-D-ribose + nicotinamide + L-lysyl-[protein]. In terms of biological role, NAD-dependent lysine deacetylase and desuccinylase that specifically removes acetyl and succinyl groups on target proteins. Modulates the activities of several proteins which are inactive in their acylated form. Deacetylates the N-terminal lysine residue of Alba, the major archaeal chromatin protein and that, in turn, increases Alba's DNA binding affinity, thereby repressing transcription. The protein is NAD-dependent protein deacylase of Pyrococcus abyssi (strain GE5 / Orsay).